The following is a 433-amino-acid chain: 3-phosphoshikimate 1-carboxyvinyltransferase (433 aa).

Lys-23, Ser-24, and Arg-28 together coordinate 3-phosphoshikimate. Residue Lys-23 participates in phosphoenolpyruvate binding. Residues Gly-95 and Arg-123 each contribute to the phosphoenolpyruvate site. The 3-phosphoshikimate site is built by Ser-170, Ser-171, Gln-172, Ser-198, Asp-317, and Lys-344. Gln-172 is a binding site for phosphoenolpyruvate. Asp-317 (proton acceptor) is an active-site residue. Residues Arg-348, Arg-391, and Lys-416 each coordinate phosphoenolpyruvate.

It belongs to the EPSP synthase family. Monomer.

The protein localises to the cytoplasm. It carries out the reaction 3-phosphoshikimate + phosphoenolpyruvate = 5-O-(1-carboxyvinyl)-3-phosphoshikimate + phosphate. The protein operates within metabolic intermediate biosynthesis; chorismate biosynthesis; chorismate from D-erythrose 4-phosphate and phosphoenolpyruvate: step 6/7. Its function is as follows. Catalyzes the transfer of the enolpyruvyl moiety of phosphoenolpyruvate (PEP) to the 5-hydroxyl of shikimate-3-phosphate (S3P) to produce enolpyruvyl shikimate-3-phosphate and inorganic phosphate. This Neisseria meningitidis serogroup C / serotype 2a (strain ATCC 700532 / DSM 15464 / FAM18) protein is 3-phosphoshikimate 1-carboxyvinyltransferase.